A 175-amino-acid chain; its full sequence is Crossover junction endodeoxyribonuclease RuvC (175 aa).

Catalysis depends on residues aspartate 16, glutamate 76, and aspartate 148. Residues aspartate 16, glutamate 76, and aspartate 148 each contribute to the Mg(2+) site.

It belongs to the RuvC family. Homodimer which binds Holliday junction (HJ) DNA. The HJ becomes 2-fold symmetrical on binding to RuvC with unstacked arms; it has a different conformation from HJ DNA in complex with RuvA. In the full resolvosome a probable DNA-RuvA(4)-RuvB(12)-RuvC(2) complex forms which resolves the HJ. Requires Mg(2+) as cofactor.

It localises to the cytoplasm. The enzyme catalyses Endonucleolytic cleavage at a junction such as a reciprocal single-stranded crossover between two homologous DNA duplexes (Holliday junction).. In terms of biological role, the RuvA-RuvB-RuvC complex processes Holliday junction (HJ) DNA during genetic recombination and DNA repair. Endonuclease that resolves HJ intermediates. Cleaves cruciform DNA by making single-stranded nicks across the HJ at symmetrical positions within the homologous arms, yielding a 5'-phosphate and a 3'-hydroxyl group; requires a central core of homology in the junction. The consensus cleavage sequence is 5'-(A/T)TT(C/G)-3'. Cleavage occurs on the 3'-side of the TT dinucleotide at the point of strand exchange. HJ branch migration catalyzed by RuvA-RuvB allows RuvC to scan DNA until it finds its consensus sequence, where it cleaves and resolves the cruciform DNA. This is Crossover junction endodeoxyribonuclease RuvC from Rhodopseudomonas palustris (strain BisB18).